Here is a 432-residue protein sequence, read N- to C-terminus: 3-phosphoshikimate 1-carboxyvinyltransferase (432 aa).

Lys-22, Ser-23, and Arg-27 together coordinate 3-phosphoshikimate. Lys-22 contributes to the phosphoenolpyruvate binding site. The phosphoenolpyruvate site is built by Gly-96 and Arg-127. 3-phosphoshikimate is bound by residues Ser-173, Ser-174, Gln-175, Ser-201, Asp-317, Asn-340, and Lys-344. Gln-175 lines the phosphoenolpyruvate pocket. Asp-317 serves as the catalytic Proton acceptor. 3 residues coordinate phosphoenolpyruvate: Arg-348, Arg-392, and Lys-417.

This sequence belongs to the EPSP synthase family. Monomer.

It is found in the cytoplasm. It carries out the reaction 3-phosphoshikimate + phosphoenolpyruvate = 5-O-(1-carboxyvinyl)-3-phosphoshikimate + phosphate. Its pathway is metabolic intermediate biosynthesis; chorismate biosynthesis; chorismate from D-erythrose 4-phosphate and phosphoenolpyruvate: step 6/7. Catalyzes the transfer of the enolpyruvyl moiety of phosphoenolpyruvate (PEP) to the 5-hydroxyl of shikimate-3-phosphate (S3P) to produce enolpyruvyl shikimate-3-phosphate and inorganic phosphate. This chain is 3-phosphoshikimate 1-carboxyvinyltransferase, found in Mannheimia haemolytica (Pasteurella haemolytica).